The chain runs to 897 residues: DNA polymerase I (897 aa).

The region spanning 1-317 (MEQPVIKEGT…ILDNTPALDN (317 aa)) is the 5'-3' exonuclease domain. Residues 318–494 (APKKSRMIVL…RLCEYFEKGG (177 aa)) enclose the 3'-5' exonuclease domain. A polymerase region spans residues 498-896 (DLLTLARDIE…FIAKRWNELK (399 aa)).

This sequence belongs to the DNA polymerase type-A family. Single-chain monomer with multiple functions.

The catalysed reaction is DNA(n) + a 2'-deoxyribonucleoside 5'-triphosphate = DNA(n+1) + diphosphate. Functionally, in addition to polymerase activity, this DNA polymerase exhibits 3'-5' and 5'-3' exonuclease activity. The sequence is that of DNA polymerase I (polA) from Helicobacter pylori (strain J99 / ATCC 700824) (Campylobacter pylori J99).